Consider the following 592-residue polypeptide: V-type ATP synthase alpha chain (592 aa).

233 to 240 (GPFGSGKT) contributes to the ATP binding site.

This sequence belongs to the ATPase alpha/beta chains family.

It catalyses the reaction ATP + H2O + 4 H(+)(in) = ADP + phosphate + 5 H(+)(out). Its function is as follows. Produces ATP from ADP in the presence of a proton gradient across the membrane. The V-type alpha chain is a catalytic subunit. The sequence is that of V-type ATP synthase alpha chain from Clostridium botulinum (strain Okra / Type B1).